The primary structure comprises 349 residues: Estrogen receptor (349 aa).

Residues 1 to 5 (YEVGM) constitute a DNA-binding region (nuclear receptor). Positions 1-38 (YEVGMMKGGIRKDRRGGRMLKHKRQREENDSRNAGALT) are disordered. The span at 12–24 (KDRRGGRMLKHKR) shows a compositional bias: basic residues. Residues 65 to 301 (TADQMVSALL…DLLLEMLDAH (237 aa)) enclose the NR LBD domain. The disordered stretch occupies residues 306–327 (PAAKGSPPSEDDPLNQLAVPSP).

Belongs to the nuclear hormone receptor family. NR3 subfamily. As to quaternary structure, binds DNA as a homodimer. Can form a heterodimer with ER-beta.

The protein resides in the nucleus. In terms of biological role, the steroid hormones and their receptors are involved in the regulation of eukaryotic gene expression and affect cellular proliferation and differentiation in target tissues. This is Estrogen receptor (ESR1) from Anolis carolinensis (Green anole).